The sequence spans 228 residues: Probable septum site-determining protein MinC (228 aa).

It belongs to the MinC family. In terms of assembly, interacts with MinD and FtsZ.

Functionally, cell division inhibitor that blocks the formation of polar Z ring septums. Rapidly oscillates between the poles of the cell to destabilize FtsZ filaments that have formed before they mature into polar Z rings. Prevents FtsZ polymerization. This Symbiobacterium thermophilum (strain DSM 24528 / JCM 14929 / IAM 14863 / T) protein is Probable septum site-determining protein MinC.